Consider the following 399-residue polypeptide: Serine/threonine-protein kinase PKZ1 (399 aa).

The interval 30-50 (PMQCAYQTQSHSNPEGAKRGR) is disordered. The region spanning 92–371 (WQLFDQIGAG…ADQMLQHPWM (280 aa)) is the Protein kinase domain. Residues 98–106 (IGAGAFGVV) and lysine 121 each bind ATP. Aspartate 219 (proton acceptor) is an active-site residue.

It belongs to the protein kinase superfamily. CAMK Ser/Thr protein kinase family.

It catalyses the reaction L-seryl-[protein] + ATP = O-phospho-L-seryl-[protein] + ADP + H(+). The enzyme catalyses L-threonyl-[protein] + ATP = O-phospho-L-threonyl-[protein] + ADP + H(+). In terms of biological role, may regulate an early stage of the zoospore pathway. The polypeptide is Serine/threonine-protein kinase PKZ1 (Phytophthora infestans (strain T30-4) (Potato late blight agent)).